Here is a 255-residue protein sequence, read N- to C-terminus: tRNA (guanine-N(1)-)-methyltransferase (255 aa).

S-adenosyl-L-methionine-binding positions include Gly113 and 133 to 138 (IGDYVL).

It belongs to the RNA methyltransferase TrmD family. In terms of assembly, homodimer.

It localises to the cytoplasm. The catalysed reaction is guanosine(37) in tRNA + S-adenosyl-L-methionine = N(1)-methylguanosine(37) in tRNA + S-adenosyl-L-homocysteine + H(+). In terms of biological role, specifically methylates guanosine-37 in various tRNAs. The protein is tRNA (guanine-N(1)-)-methyltransferase of Enterobacter sp. (strain 638).